Here is a 290-residue protein sequence, read N- to C-terminus: Endo-1,4-beta-xylanase B (290 aa).

Residues 1 to 19 (MVSFNSLLVAVSAATCALA) form the signal peptide. Asn-26 is a glycosylation site (N-linked (GlcNAc...) asparagine). The GH11 domain maps to 34–222 (QSTPAGTGTN…SSGSSTVTVN (189 aa)). The active-site Nucleophile is the Glu-118. Catalysis depends on Glu-209, which acts as the Proton donor. Positions 223 to 248 (PAGGVTSPIAPTGPSSVSTTPSGPSS) are disordered. Positions 234–248 (TGPSSVSTTPSGPSS) are enriched in low complexity. The CBM1 domain maps to 255–290 (TCSALYGQCGGQGWTGPTCCSSGTCKFSNNWYSQCL).

The protein belongs to the glycosyl hydrolase 11 (cellulase G) family.

Its subcellular location is the secreted. The catalysed reaction is Endohydrolysis of (1-&gt;4)-beta-D-xylosidic linkages in xylans.. Its pathway is glycan degradation; xylan degradation. Endo-1,4-beta-xylanase involved in the hydrolysis of xylan, a major structural heterogeneous polysaccharide found in plant biomass representing the second most abundant polysaccharide in the biosphere, after cellulose. The chain is Endo-1,4-beta-xylanase B (xynB) from Phanerodontia chrysosporium (White-rot fungus).